The primary structure comprises 264 residues: L-aspartate dehydrogenase (264 aa).

Positions 120 and 186 each coordinate NAD(+). His216 is a catalytic residue.

The protein belongs to the L-aspartate dehydrogenase family.

The enzyme catalyses L-aspartate + NADP(+) + H2O = oxaloacetate + NH4(+) + NADPH + H(+). It catalyses the reaction L-aspartate + NAD(+) + H2O = oxaloacetate + NH4(+) + NADH + H(+). Its pathway is cofactor biosynthesis; NAD(+) biosynthesis; iminoaspartate from L-aspartate (dehydrogenase route): step 1/1. Its function is as follows. Specifically catalyzes the NAD or NADP-dependent dehydrogenation of L-aspartate to iminoaspartate. This chain is L-aspartate dehydrogenase, found in Serratia proteamaculans (strain 568).